The primary structure comprises 413 residues: 3-oxoacyl-[acyl-carrier-protein] synthase 2 (413 aa).

In terms of domain architecture, Ketosynthase family 3 (KS3) spans 3–412; sequence KRRVVVTGLG…GTNGSLIFKK (410 aa). Residues cysteine 164, histidine 304, and histidine 341 each act as for beta-ketoacyl synthase activity in the active site.

Belongs to the thiolase-like superfamily. Beta-ketoacyl-ACP synthases family. As to quaternary structure, homodimer.

It catalyses the reaction a fatty acyl-[ACP] + malonyl-[ACP] + H(+) = a 3-oxoacyl-[ACP] + holo-[ACP] + CO2. It carries out the reaction (9Z)-hexadecenoyl-[ACP] + malonyl-[ACP] + H(+) = 3-oxo-(11Z)-octadecenoyl-[ACP] + holo-[ACP] + CO2. Its pathway is lipid metabolism; fatty acid biosynthesis. In terms of biological role, involved in the type II fatty acid elongation cycle. Catalyzes the elongation of a wide range of acyl-ACP by the addition of two carbons from malonyl-ACP to an acyl acceptor. Can efficiently catalyze the conversion of palmitoleoyl-ACP (cis-hexadec-9-enoyl-ACP) to cis-vaccenoyl-ACP (cis-octadec-11-enoyl-ACP), an essential step in the thermal regulation of fatty acid composition. In Escherichia coli O157:H7, this protein is 3-oxoacyl-[acyl-carrier-protein] synthase 2 (fabF).